Consider the following 167-residue polypeptide: Caffeine dehydrogenase subunit gamma (167 aa).

Positions 4 to 80 constitute a 2Fe-2S ferredoxin-type domain; that stretch reads HVISLTVNGQ…GHSIRTVEAL (77 aa). [2Fe-2S] cluster-binding residues include cysteine 42, cysteine 47, cysteine 50, and cysteine 62.

As to quaternary structure, heterotrimer composed of an alpha (CdhA), a beta (CdhB) and a gamma (CdhC) subunit.

The catalysed reaction is caffeine + a ubiquinone + H2O = 1,3,7-trimethylurate + a ubiquinol. It carries out the reaction ubiquinone-0 + caffeine + H2O = ubiquinol-0 + 1,3,7-trimethylurate. The enzyme catalyses theobromine + a ubiquinone + H2O = 3,7-dimethylurate + a ubiquinol. Functionally, component of the caffeine dehydrogenase complex that catalyzes the hydrolytical oxidation of 1,3,7-trimethylxanthine (caffeine) by incorporation of an oxygen atom originating from a water molecule into position C-8 to produce 1,3,7-trimethyluric acid (TMU). Coenzyme Q0 (ubiquinone-0) is the preferred electron acceptor and, to a lesser extent, coenzyme Q2 (ubiquinone-2) can also be used, but oxygen and NAD(P)(+) cannot. Is involved in a caffeine degradation pathway that allows Pseudomonas sp. strain CBB1 to grow on caffeine as the sole carbon and nitrogen source. Is also active with theobromine as substrate, but shows a very poor activity with theophylline and is not active with xanthine, 3-methylxanthine, 7-methylxanthine, TMU, and 3,7-dimethylurate. The sequence is that of Caffeine dehydrogenase subunit gamma from Pseudomonas sp. (strain CBB1).